The chain runs to 428 residues: Tyrosine--tRNA ligase (428 aa).

Y41 provides a ligand contact to L-tyrosine. The 'HIGH' region motif lies at 46–55 (PTADSLHLGH). Y179 and Q183 together coordinate L-tyrosine. Residues 239-243 (KFGKT) carry the 'KMSKS' region motif. Position 242 (K242) interacts with ATP. Positions 361 to 418 (TDLMQALVDAELQPSRGQARKTIASNAVTINGEKQSDPEYIFNDEDRLFGRYTLLRRG) constitute an S4 RNA-binding domain.

This sequence belongs to the class-I aminoacyl-tRNA synthetase family. TyrS type 1 subfamily. Homodimer.

The protein resides in the cytoplasm. It catalyses the reaction tRNA(Tyr) + L-tyrosine + ATP = L-tyrosyl-tRNA(Tyr) + AMP + diphosphate + H(+). Catalyzes the attachment of tyrosine to tRNA(Tyr) in a two-step reaction: tyrosine is first activated by ATP to form Tyr-AMP and then transferred to the acceptor end of tRNA(Tyr). The sequence is that of Tyrosine--tRNA ligase from Salmonella arizonae (strain ATCC BAA-731 / CDC346-86 / RSK2980).